Here is a 585-residue protein sequence, read N- to C-terminus: S-antigen protein (585 aa).

Positions 1–23 (MNRILSVTLCLFFIYLYIYKTYG) are cleaved as a signal peptide. The interval 51-585 (NGKGQKYEDL…NSIINMLIGM (535 aa)) is disordered. A compositionally biased stretch (acidic residues) spans 59-85 (DLEEEKEGENDDEEDSNSEESNNDEEN). Residues 96-113 (QETHGSEDEVSNGREDKV) show a composition bias toward basic and acidic residues. A run of 56 repeats spans residues 102-109 (EDEVSNGR), 110-117 (EDKVSNGG), 118-125 (EDEVSNGG), 126-133 (EDEVSNGR), 134-141 (EDKVSNGG), 142-149 (EDEVSNGR), 150-157 (EDKVSNGG), 158-165 (EDEVSNGR), 166-173 (EDKVSNGG), 174-181 (EDEVSNGR), 182-189 (EDKVSNGG), 190-197 (EDEVSNGR), 198-205 (EDKVSNGR), 206-213 (EDKVSNGG), 214-221 (EDEVSNGR), 222-229 (EDKVSNGR), 230-237 (EDKVSNGG), 238-245 (EDEVSNGR), 246-253 (EDKVSNGG), 254-261 (EDEVSNGR), 262-269 (EDKVSNGG), 270-277 (EDEVSNGR), 278-285 (EDKVSNGR), 286-293 (EDEVSNGR), 294-301 (EDKVSNGG), 302-309 (EDEVSNGR), 310-317 (EDKVSNGG), 318-325 (EDEVSNGR), 326-333 (EDKVSNGR), 334-341 (EDKVSNGG), 342-349 (EDEVSNGR), 350-357 (EDKVSNGG), 358-365 (EDEVSNGR), 366-373 (EDKVSNGR), 374-381 (EDKVSNGR), 382-389 (EDEVSNGR), 390-397 (EDKVSNGG), 398-405 (EDEVSNGR), 406-413 (EDKVSNGR), 414-421 (EDKVSNGG), 422-429 (EDEVSNGR), 430-437 (EDKVSNGG), 438-445 (EDEVSNGR), 446-453 (EDKVSNGR), 454-461 (EDKVSNGR), 462-469 (EDKVSNGG), 470-477 (EDEVSNGG), 478-485 (EDEVSNGR), 486-493 (EDKVSNGG), 494-501 (EDEVSNGR), 502-509 (EDKVSNGG), 510-517 (EDEVSNGR), 518-525 (EDKVSNGG), 526-533 (EDEVSNGR), 534-541 (EDKVSNGR), and 542-549 (EDEVSNGR). The interval 102–549 (EDEVSNGRED…GREDEVSNGR (448 aa)) is 56 X 8 AA tandem repeats of E-D-[EK]-V-S-N-G-[RG]. A compositionally biased stretch (acidic residues) spans 117-129 (GEDEVSNGGEDEV). Basic and acidic residues-rich tracts occupy residues 194-209 (SNGR…EDKV) and 218-233 (SNGR…EDKV). Over residues 274–297 (SNGREDKVSNGREDEVSNGREDKV) the composition is skewed to basic and acidic residues. Over residues 322 to 337 (SNGREDKVSNGREDKV) the composition is skewed to basic and acidic residues. Basic and acidic residues-rich tracts occupy residues 362-393 (SNGR…EDKV) and 402-417 (SNGR…EDKV). Residues 442–465 (SNGREDKVSNGREDKVSNGREDKV) show a composition bias toward basic and acidic residues. Acidic residues predominate over residues 469–481 (GEDEVSNGGEDEV). Composition is skewed to basic and acidic residues over residues 530 to 553 (SNGR…EDKG) and 560 to 569 (ELSHNSESHT). A compositionally biased stretch (low complexity) spans 576-585 (NSIINMLIGM).

The protein localises to the parasitophorous vacuole. Its function is as follows. S antigens are soluble heat-stable proteins present in the sera of some infected individuals. This Plasmodium falciparum (isolate 3D7) protein is S-antigen protein.